Reading from the N-terminus, the 632-residue chain is 1-deoxy-D-xylulose-5-phosphate synthase (632 aa).

Thiamine diphosphate is bound by residues His77 and 118–120 (GHA). Asp149 contacts Mg(2+). Thiamine diphosphate contacts are provided by residues 150–151 (GS), Asn178, Phe287, and Glu372. Asn178 serves as a coordination point for Mg(2+).

This sequence belongs to the transketolase family. DXPS subfamily. As to quaternary structure, homodimer. The cofactor is Mg(2+). It depends on thiamine diphosphate as a cofactor.

It carries out the reaction D-glyceraldehyde 3-phosphate + pyruvate + H(+) = 1-deoxy-D-xylulose 5-phosphate + CO2. It functions in the pathway metabolic intermediate biosynthesis; 1-deoxy-D-xylulose 5-phosphate biosynthesis; 1-deoxy-D-xylulose 5-phosphate from D-glyceraldehyde 3-phosphate and pyruvate: step 1/1. Catalyzes the acyloin condensation reaction between C atoms 2 and 3 of pyruvate and glyceraldehyde 3-phosphate to yield 1-deoxy-D-xylulose-5-phosphate (DXP). The protein is 1-deoxy-D-xylulose-5-phosphate synthase of Chlorobium luteolum (strain DSM 273 / BCRC 81028 / 2530) (Pelodictyon luteolum).